Consider the following 132-residue polypeptide: uncharacterized protein (132 aa).

Residues 1–69 (MNIGEAAKKS…LDEVGKLLTL (69 aa)) enclose the HTH merR-type domain. The H-T-H motif DNA-binding region spans 4 to 23 (GEAAKKSGLTPKMIRYYESI).

The protein localises to the cytoplasm. This is an uncharacterized protein from Pseudomonas aeruginosa (strain ATCC 15692 / DSM 22644 / CIP 104116 / JCM 14847 / LMG 12228 / 1C / PRS 101 / PAO1).